Consider the following 343-residue polypeptide: MGSADDRRFEVLRAIVADFVATKEPIGSKAIVERHNLGVSSATVRNDMAVLEAEGYITQPHTSSGRVPTEKGYREFVDRLQDVKPMSGAERRAILQFLESGVDLDDVLRRAVRLLAQLTRQVAVVQYPTLTTSTVRRLEVVALTPARLLLVVITDTGRVDQRIVELGDGIDDGQLAQLRDMLGSALEGKPLAAASVAVSDLAVHLNGQGGLADAVGRSATVLVETLVEHTEERLLLGGTANLTRNTADFGGSLRSVLEALEEQVVVLRLLAKQQEAGKVTVRIGHETEAEEMAGTSVISTAYGSAGKVFGGMGVLGPTRMDYPGTIANVAAVALYIGEVLGNR.

This sequence belongs to the HrcA family.

Its function is as follows. Negative regulator of class I heat shock genes (grpE-dnaK-dnaJ and groELS operons). Prevents heat-shock induction of these operons. The protein is Heat-inducible transcription repressor HrcA of Mycolicibacterium vanbaalenii (strain DSM 7251 / JCM 13017 / BCRC 16820 / KCTC 9966 / NRRL B-24157 / PYR-1) (Mycobacterium vanbaalenii).